A 31-amino-acid polypeptide reads, in one-letter code: Conotoxin (31 aa).

This sequence belongs to the conotoxin S superfamily. In terms of processing, contains 5 disulfide bonds. In terms of tissue distribution, expressed by the venom duct.

It is found in the secreted. This chain is Conotoxin, found in Conus striatus (Striated cone).